Reading from the N-terminus, the 316-residue chain is 4-hydroxy-3-methylbut-2-enyl diphosphate reductase (316 aa).

Residue Cys12 participates in [4Fe-4S] cluster binding. 2 residues coordinate (2E)-4-hydroxy-3-methylbut-2-enyl diphosphate: His41 and His74. His41 and His74 together coordinate dimethylallyl diphosphate. Isopentenyl diphosphate is bound by residues His41 and His74. Residue Cys96 coordinates [4Fe-4S] cluster. Position 124 (His124) interacts with (2E)-4-hydroxy-3-methylbut-2-enyl diphosphate. His124 is a binding site for dimethylallyl diphosphate. His124 is an isopentenyl diphosphate binding site. Glu126 serves as the catalytic Proton donor. Thr169 contacts (2E)-4-hydroxy-3-methylbut-2-enyl diphosphate. Cys199 serves as a coordination point for [4Fe-4S] cluster. (2E)-4-hydroxy-3-methylbut-2-enyl diphosphate is bound by residues Ser227, Ser228, Asn229, and Ser271. Dimethylallyl diphosphate-binding residues include Ser227, Ser228, Asn229, and Ser271. 4 residues coordinate isopentenyl diphosphate: Ser227, Ser228, Asn229, and Ser271.

The protein belongs to the IspH family. The cofactor is [4Fe-4S] cluster.

The catalysed reaction is isopentenyl diphosphate + 2 oxidized [2Fe-2S]-[ferredoxin] + H2O = (2E)-4-hydroxy-3-methylbut-2-enyl diphosphate + 2 reduced [2Fe-2S]-[ferredoxin] + 2 H(+). It carries out the reaction dimethylallyl diphosphate + 2 oxidized [2Fe-2S]-[ferredoxin] + H2O = (2E)-4-hydroxy-3-methylbut-2-enyl diphosphate + 2 reduced [2Fe-2S]-[ferredoxin] + 2 H(+). It functions in the pathway isoprenoid biosynthesis; dimethylallyl diphosphate biosynthesis; dimethylallyl diphosphate from (2E)-4-hydroxy-3-methylbutenyl diphosphate: step 1/1. It participates in isoprenoid biosynthesis; isopentenyl diphosphate biosynthesis via DXP pathway; isopentenyl diphosphate from 1-deoxy-D-xylulose 5-phosphate: step 6/6. In terms of biological role, catalyzes the conversion of 1-hydroxy-2-methyl-2-(E)-butenyl 4-diphosphate (HMBPP) into a mixture of isopentenyl diphosphate (IPP) and dimethylallyl diphosphate (DMAPP). Acts in the terminal step of the DOXP/MEP pathway for isoprenoid precursor biosynthesis. The sequence is that of 4-hydroxy-3-methylbut-2-enyl diphosphate reductase from Xanthomonas oryzae pv. oryzae (strain MAFF 311018).